We begin with the raw amino-acid sequence, 366 residues long: MELAEIRNELEKTAQQIKDFRGSLDLDSMEVRIAELEDQMLDPNFWNDQQAAQKVINESNGYKETYQAFHALEEEQESMEISLELLKEEADEDLQAELEKDIKAYVATISEFELKLMLSDPYDKNNAILELHPGAGGTESQDWGSMLLRMYQRWSEKKGFKVEMLDYQAGDEAGIKSVTLLIKGHNAYGYLKAEKGVHRLVRISPFDSSGRRHTSFVSVDVMPELDDEIEIEVRTEDLKIDTYRATGAGGQHINTTDSAVRMTHIPSGIVVTCQSERSQLKNREQAMKMLKTKLYQKEQEEKERELAEIRGEQKEIGWGSQIRSYVFHPYSMVKDHRTNYETGNIQAVMDGDLDDFINAYLRSRIG.

Glutamine 251 is subject to N5-methylglutamine.

The protein belongs to the prokaryotic/mitochondrial release factor family. Post-translationally, methylated by PrmC. Methylation increases the termination efficiency of RF2.

It is found in the cytoplasm. Functionally, peptide chain release factor 2 directs the termination of translation in response to the peptide chain termination codons UGA and UAA. In Listeria innocua serovar 6a (strain ATCC BAA-680 / CLIP 11262), this protein is Peptide chain release factor 2 (prfB).